Reading from the N-terminus, the 378-residue chain is Forkhead box protein I1 (378 aa).

2 disordered regions span residues 1–26 (MSSF…QEPP) and 208–278 (DNGN…APCL). Positions 123-217 (RPPYSYSALI…DNGNFRRKRK (95 aa)) form a DNA-binding region, fork-head. The segment covering 236-248 (SSLPVDSPKTTEP) has biased composition (polar residues).

As to expression, expressed in kidney.

The protein localises to the nucleus. Functionally, transcriptional activator required for the development of normal hearing, sense of balance and kidney function. Required for the expression of SLC26A4/PDS, JAG1 and COCH in a subset of epithelial cells and the development of the endolymphatic system in the inner ear. Also required for the expression of SLC4A1/AE1, SLC4A9/AE4, ATP6V1B1 and the differentiation of intercalated cells in the epithelium of distal renal tubules. In Homo sapiens (Human), this protein is Forkhead box protein I1 (FOXI1).